Reading from the N-terminus, the 299-residue chain is Taste receptor type 2 member 1 (299 aa).

The Extracellular segment spans residues 1 to 9 (MLESHLIIH). The chain crosses the membrane as a helical span at residues 10–30 (FLLAVIQFLLGTFTNGIIVVV). The Cytoplasmic portion of the chain corresponds to 31-55 (NGIDLIKHRKMAPLDLLLSCLAVSR). Residues 56-76 (IFLQLFIFYVNVIVIFFIEFI) traverse the membrane as a helical segment. Topologically, residues 77-81 (MCSEN) are extracellular. The helical transmembrane segment at 82–102 (CAILLFINELELWLATWLGVF) threads the bilayer. At 103 to 124 (YCAKVASVPHPLFIWLKMKISK) the chain is on the cytoplasmic side. The helical transmembrane segment at 125-145 (LVPWMILGSLLYVSMTCVFHS) threads the bilayer. At 146 to 178 (KYAGFMVPYFLRNFFSQNATIQKEDTPAIQIFS) the chain is on the extracellular side. Asn163 carries an N-linked (GlcNAc...) asparagine glycan. The chain crosses the membrane as a helical span at residues 179–199 (FVAEFLVPLLIFLVAVLLLIF). Residues 200 to 222 (SLGRHTRQMRNTVAGSRVPGRGA) lie on the Cytoplasmic side of the membrane. The chain crosses the membrane as a helical span at residues 223 to 243 (PISALLSILSFVILYFSHCMI). Over 244–257 (KVFLSSLKFHVRSF) the chain is Extracellular. Residues 258-278 (ILPFFILVIGIYPSGHSLILI) traverse the membrane as a helical segment. The Cytoplasmic portion of the chain corresponds to 279-299 (LGNXKLKQNAKKFLLHSKCCQ).

Belongs to the G-protein coupled receptor T2R family.

The protein resides in the membrane. Receptor that may play a role in the perception of bitterness and is gustducin-linked. May play a role in sensing the chemical composition of the gastrointestinal content. The activity of this receptor may stimulate alpha gustducin, mediate PLC-beta-2 activation and lead to the gating of TRPM5. The chain is Taste receptor type 2 member 1 (TAS2R1) from Pongo pygmaeus (Bornean orangutan).